A 63-amino-acid chain; its full sequence is Short neurotoxin 2 (63 aa).

4 disulfides stabilise this stretch: cysteine 3–cysteine 21, cysteine 15–cysteine 39, cysteine 43–cysteine 49, and cysteine 50–cysteine 55.

Belongs to the three-finger toxin family. Short-chain subfamily. Orphan group XVIII sub-subfamily. In terms of tissue distribution, expressed by the venom gland.

The protein resides in the secreted. Blocks both the muscle-twitch response to nerve stimulation and the response to exogenous acetylcholine. The sequence is that of Short neurotoxin 2 from Bungarus fasciatus (Banded krait).